A 458-amino-acid chain; its full sequence is Brassinosteroid-related acyltransferase 1 (458 aa).

Residue H164 is the Proton acceptor of the active site.

The protein belongs to the plant acyltransferase family. In terms of tissue distribution, highly expressed in young tissues and vascular bundles. Mostly expressed in young leaves, primary roots, flowers (including petals and sepals), and siliques.

Its subcellular location is the endoplasmic reticulum. It is found in the nucleus. The protein operates within plant hormone biosynthesis; brassinosteroid biosynthesis. In terms of biological role, brassinosteroids (BR) acyltransferase with acyl-CoA ligase activity toward brassinolide (BL), castasterone (CS), typhasterol (TY), 6-deoxotyphasterol (6-deoxoTY), and 6-deoxocastasterone (6-deoxoCS) and thus converts them to corresponding lauroyl esters. Regulates BR homeostasis and promotes BR-mediated cell growth regulation. Involved in vascular bundle development. The sequence is that of Brassinosteroid-related acyltransferase 1 from Arabidopsis thaliana (Mouse-ear cress).